A 240-amino-acid polypeptide reads, in one-letter code: Large ribosomal subunit protein uL1 (240 aa).

This sequence belongs to the universal ribosomal protein uL1 family. In terms of assembly, part of the 50S ribosomal subunit.

Binds directly to 23S rRNA. The L1 stalk is quite mobile in the ribosome, and is involved in E site tRNA release. Its function is as follows. Protein L1 is also a translational repressor protein, it controls the translation of the L11 operon by binding to its mRNA. The protein is Large ribosomal subunit protein uL1 of Nocardioides sp. (strain ATCC BAA-499 / JS614).